The primary structure comprises 570 residues: Probable metalloreductase AIM14 (570 aa).

Transmembrane regions (helical) follow at residues 21 to 41, 70 to 90, 101 to 118, 142 to 162, 177 to 197, 204 to 224, and 230 to 250; these read IKYGYYVLIISLVYLIGLALL, AIHLGILFFAVLIPFYYHYSL, LGRLSYALIPLNLFLTLR, IITVIGLLHGIFFIIKWAIDD, FVGFIISILVLFLLICSIGPM, LFYIVHNLVNVAFILLTPIHS, and FPFLLLNCTLLFIHIINRIVF. The Ferric oxidoreductase domain maps to 101–219; the sequence is LGRLSYALIP…NLVNVAFILL (119 aa). Residues 250–388 enclose the FAD-binding FR-type domain; the sequence is FAKSLMILNK…GGSGISFALP (139 aa). The segment covering 481–505 has biased composition (polar residues); it reads SNFNSENADSNDNTPETSHSPTKEN. A disordered region spans residues 481 to 507; that stretch reads SNFNSENADSNDNTPETSHSPTKENGS.

The protein belongs to the ferric reductase (FRE) family. AIM14 subfamily. Interacts with ribosomes.

It localises to the membrane. Its function is as follows. Probable cell surface metalloreductase. May be involved in iron or copper homeostasis. This chain is Probable metalloreductase AIM14 (AIM14), found in Saccharomyces cerevisiae (strain RM11-1a) (Baker's yeast).